The sequence spans 135 residues: Endocuticle structural glycoprotein SgAbd-2 (135 aa).

Gln-1 carries the pyrrolidone carboxylic acid modification. Residues Thr-11 and Thr-100 are each glycosylated (O-linked (HexNAc...) threonine). The region spanning 32–102 (DGSYAYSYQT…AEGAHLPTPP (71 aa)) is the Chitin-binding type R&amp;R domain.

Component of the abdominal endocuticle. The sequence is that of Endocuticle structural glycoprotein SgAbd-2 from Schistocerca gregaria (Desert locust).